Reading from the N-terminus, the 672-residue chain is Acetyl-coenzyme A synthetase (672 aa).

Residues arginine 217 to lysine 220 and threonine 335 contribute to the CoA site. ATP is bound by residues glycine 411–proline 413, aspartate 435–threonine 440, aspartate 529, arginine 544, and arginine 555. Mg(2+) contacts are provided by valine 566, histidine 568, and isoleucine 571. Arginine 613 contacts CoA. Residue lysine 638 is modified to N6-acetyllysine.

This sequence belongs to the ATP-dependent AMP-binding enzyme family. Mg(2+) is required as a cofactor. Post-translationally, acetylated. Deacetylation by the SIR2-homolog deacetylase activates the enzyme. The N-terminus is blocked.

The enzyme catalyses acetate + ATP + CoA = acetyl-CoA + AMP + diphosphate. Catalyzes the conversion of acetate into acetyl-CoA (AcCoA), an essential intermediate at the junction of anabolic and catabolic pathways. AcsA undergoes a two-step reaction. In the first half reaction, AcsA combines acetate with ATP to form acetyl-adenylate (AcAMP) intermediate. In the second half reaction, it can then transfer the acetyl group from AcAMP to the sulfhydryl group of CoA, forming the product AcCoA. This chain is Acetyl-coenzyme A synthetase, found in Methanothrix soehngenii (Methanosaeta concilii).